Here is a 306-residue protein sequence, read N- to C-terminus: MQQILNDIAAEMALETDRGKVADYIPQLAHVDPNQFGIAVATPDGQVYVAGDASTLFSIQSISKVFTLTIGLGKLGDAIWTHVGREPSGDPFNSITVLEFESGRPRNPFINAGAIAVVDAIMMGHEPKETLGEILRFVHFIADDDSIRFDHKVAASEMDHRDRNAALAHFMKSFGHIKHDVDKVLGVYFHQCAIAMSCEQLARAGLFLVSNGVNQHTGIRVINAQQSRRINSLMMMCGHYDGAGEFAYRVGLPGKSGVGGGILTIAPGKGSIAVWSPGLDHVGNSKLGSKALELLVQKTGWSVFSN.

Serine 61, asparagine 111, glutamate 157, asparagine 164, tyrosine 188, tyrosine 240, and valine 258 together coordinate substrate.

The protein belongs to the glutaminase family. Homotetramer.

The catalysed reaction is L-glutamine + H2O = L-glutamate + NH4(+). This chain is Glutaminase, found in Psychrobacter cryohalolentis (strain ATCC BAA-1226 / DSM 17306 / VKM B-2378 / K5).